We begin with the raw amino-acid sequence, 258 residues long: Large ribosomal subunit protein bL19m (258 aa).

The segment at 235 to 258 (SKGLTGGVGGGGGKQKGQESKKKN) is disordered. Residues 238 to 249 (LTGGVGGGGGKQ) are compositionally biased toward gly residues.

The protein belongs to the bacterial ribosomal protein bL19 family. In terms of assembly, component of the mitochondrial large ribosomal subunit (mt-LSU). Mature N.crassa 74S mitochondrial ribosomes consist of a small (37S) and a large (54S) subunit. The 37S small subunit contains a 16S ribosomal RNA (16S mt-rRNA) and 32 different proteins. The 54S large subunit contains a 23S rRNA (23S mt-rRNA) and 42 different proteins.

The protein resides in the mitochondrion. Functionally, component of the mitochondrial ribosome (mitoribosome), a dedicated translation machinery responsible for the synthesis of mitochondrial genome-encoded proteins, including at least some of the essential transmembrane subunits of the mitochondrial respiratory chain. The mitoribosomes are attached to the mitochondrial inner membrane and translation products are cotranslationally integrated into the membrane. In Neurospora crassa (strain ATCC 24698 / 74-OR23-1A / CBS 708.71 / DSM 1257 / FGSC 987), this protein is Large ribosomal subunit protein bL19m (img1).